A 301-amino-acid polypeptide reads, in one-letter code: Acetylglutamate kinase (301 aa).

Substrate-binding positions include 72 to 73, R94, and N199; that span reads GG.

Belongs to the acetylglutamate kinase family. ArgB subfamily.

Its subcellular location is the cytoplasm. The catalysed reaction is N-acetyl-L-glutamate + ATP = N-acetyl-L-glutamyl 5-phosphate + ADP. It functions in the pathway amino-acid biosynthesis; L-arginine biosynthesis; N(2)-acetyl-L-ornithine from L-glutamate: step 2/4. Catalyzes the ATP-dependent phosphorylation of N-acetyl-L-glutamate. The chain is Acetylglutamate kinase from Bartonella henselae (strain ATCC 49882 / DSM 28221 / CCUG 30454 / Houston 1) (Rochalimaea henselae).